We begin with the raw amino-acid sequence, 359 residues long: Protein Wnt-5b (359 aa).

The first 17 residues, 1 to 17 (MPSLLLLFTAALLSSWA), serve as a signal peptide directing secretion. Cysteines 83 and 94 form a disulfide. Residues Asn93 and Asn99 are each glycosylated (N-linked (GlcNAc...) asparagine). Cystine bridges form between Cys133/Cys141, Cys143/Cys161, Cys217/Cys231, Cys219/Cys226, Cys288/Cys319, Cys304/Cys314, Cys318/Cys358, Cys334/Cys349, Cys336/Cys346, and Cys341/Cys342. A lipid anchor (O-palmitoleoyl serine; by PORCN) is attached at Ser223. Asn291 and Asn305 each carry an N-linked (GlcNAc...) asparagine glycan.

Belongs to the Wnt family. Interacts with PORCN. Post-translationally, palmitoleoylation is required for efficient binding to frizzled receptors. Depalmitoleoylation leads to Wnt signaling pathway inhibition.

It localises to the secreted. Its subcellular location is the extracellular space. The protein localises to the extracellular matrix. In terms of biological role, ligand for members of the frizzled family of seven transmembrane receptors. Probable developmental protein. May be a signaling molecule which affects the development of discrete regions of tissues. Is likely to signal over only few cell diameters. This Homo sapiens (Human) protein is Protein Wnt-5b (WNT5B).